We begin with the raw amino-acid sequence, 53 residues long: Photosystem II reaction center protein K (53 aa).

Residues 1–16 constitute a propeptide that is removed on maturation; that stretch reads MLKFYLENVFHLIFFA. A helical transmembrane segment spans residues 28-48; sequence IVNVMPIIPLFFFLLAFVWQA.

This sequence belongs to the PsbK family. As to quaternary structure, PSII is composed of 1 copy each of membrane proteins PsbA, PsbB, PsbC, PsbD, PsbE, PsbF, PsbH, PsbI, PsbJ, PsbK, PsbL, PsbM, PsbT, PsbX, PsbY, PsbZ, Psb30/Ycf12, at least 3 peripheral proteins of the oxygen-evolving complex and a large number of cofactors. It forms dimeric complexes.

It is found in the plastid. The protein resides in the chloroplast thylakoid membrane. Functionally, one of the components of the core complex of photosystem II (PSII). PSII is a light-driven water:plastoquinone oxidoreductase that uses light energy to abstract electrons from H(2)O, generating O(2) and a proton gradient subsequently used for ATP formation. It consists of a core antenna complex that captures photons, and an electron transfer chain that converts photonic excitation into a charge separation. This Huperzia lucidula (Shining clubmoss) protein is Photosystem II reaction center protein K.